The following is a 191-amino-acid chain: Thymidine kinase (191 aa).

ATP is bound by residues 15 to 22 (GSMFSGKS) and 88 to 91 (DEVQ). Catalysis depends on Glu-89, which acts as the Proton acceptor. Residues Cys-145, Cys-148, Cys-183, and His-186 each coordinate Zn(2+).

The protein belongs to the thymidine kinase family. As to quaternary structure, homotetramer.

It is found in the cytoplasm. It catalyses the reaction thymidine + ATP = dTMP + ADP + H(+). The sequence is that of Thymidine kinase from Macrococcus caseolyticus (strain JCSC5402) (Macrococcoides caseolyticum).